Here is a 316-residue protein sequence, read N- to C-terminus: 4-hydroxy-3-methylbut-2-enyl diphosphate reductase (316 aa).

Cysteine 12 lines the [4Fe-4S] cluster pocket. 2 residues coordinate (2E)-4-hydroxy-3-methylbut-2-enyl diphosphate: histidine 41 and histidine 74. Dimethylallyl diphosphate contacts are provided by histidine 41 and histidine 74. The isopentenyl diphosphate site is built by histidine 41 and histidine 74. [4Fe-4S] cluster is bound at residue cysteine 96. Residue histidine 124 participates in (2E)-4-hydroxy-3-methylbut-2-enyl diphosphate binding. Histidine 124 contributes to the dimethylallyl diphosphate binding site. Isopentenyl diphosphate is bound at residue histidine 124. Catalysis depends on glutamate 126, which acts as the Proton donor. Position 167 (threonine 167) interacts with (2E)-4-hydroxy-3-methylbut-2-enyl diphosphate. Cysteine 197 contributes to the [4Fe-4S] cluster binding site. Residues serine 225, serine 226, asparagine 227, and serine 269 each coordinate (2E)-4-hydroxy-3-methylbut-2-enyl diphosphate. Dimethylallyl diphosphate is bound by residues serine 225, serine 226, asparagine 227, and serine 269. Isopentenyl diphosphate-binding residues include serine 225, serine 226, asparagine 227, and serine 269.

It belongs to the IspH family. As to quaternary structure, homodimer. Requires [4Fe-4S] cluster as cofactor.

It carries out the reaction isopentenyl diphosphate + 2 oxidized [2Fe-2S]-[ferredoxin] + H2O = (2E)-4-hydroxy-3-methylbut-2-enyl diphosphate + 2 reduced [2Fe-2S]-[ferredoxin] + 2 H(+). The enzyme catalyses dimethylallyl diphosphate + 2 oxidized [2Fe-2S]-[ferredoxin] + H2O = (2E)-4-hydroxy-3-methylbut-2-enyl diphosphate + 2 reduced [2Fe-2S]-[ferredoxin] + 2 H(+). It functions in the pathway isoprenoid biosynthesis; dimethylallyl diphosphate biosynthesis; dimethylallyl diphosphate from (2E)-4-hydroxy-3-methylbutenyl diphosphate: step 1/1. Its pathway is isoprenoid biosynthesis; isopentenyl diphosphate biosynthesis via DXP pathway; isopentenyl diphosphate from 1-deoxy-D-xylulose 5-phosphate: step 6/6. Its function is as follows. Catalyzes the conversion of 1-hydroxy-2-methyl-2-(E)-butenyl 4-diphosphate (HMBPP) into a mixture of isopentenyl diphosphate (IPP) and dimethylallyl diphosphate (DMAPP). Acts in the terminal step of the DOXP/MEP pathway for isoprenoid precursor biosynthesis. In Salmonella paratyphi A (strain ATCC 9150 / SARB42), this protein is 4-hydroxy-3-methylbut-2-enyl diphosphate reductase.